The chain runs to 131 residues: L-aspartate semialdehyde sulfurtransferase iron-sulfur subunit (131 aa).

2 4Fe-4S ferredoxin-type domains span residues 73 to 102 and 103 to 131; these read KVIK…MDED and YNVV…EIFE. Residues Cys-82, Cys-85, Cys-88, Cys-92, Cys-112, Cys-115, Cys-118, and Cys-122 each contribute to the [4Fe-4S] cluster site.

In terms of assembly, may form a complex with MJ0100. It depends on [4Fe-4S] cluster as a cofactor.

It functions in the pathway amino-acid biosynthesis. In terms of biological role, required for O-acetylhomoserine sulfhydrylase (OAHS)-independent homocysteine (Hcy) biosynthesis. Together with MJ0100, catalyzes the condensation of sulfide with aspartate semialdehyde to generate homocysteine. May be involved in the reduction of the disulfide formed in MJ0100. The polypeptide is L-aspartate semialdehyde sulfurtransferase iron-sulfur subunit (Methanocaldococcus jannaschii (strain ATCC 43067 / DSM 2661 / JAL-1 / JCM 10045 / NBRC 100440) (Methanococcus jannaschii)).